A 309-amino-acid polypeptide reads, in one-letter code: MYTVELGKLVEKMNLENCTPEIDISSIQITQPDVNRPALQLTGFFDYFDSDRVQIIGNVEHAYMQKMEKDHGLGIMKKLMSFKMPCIVFCRGIEVSEDFKEVAIEEGVPIFRTEKTTSSFMAEVIRWLKVELAPRISIHGVLVDVYGEGILIMGESGIGKSEAALELIKRGHRLVTDDLVEIKKVSDDTLIGTAPDITRHFIELRGIGIIDVKTLFGVESVKNTQSIDLVIKLEEWNRDKEYDRLGLEEQYIEFLGNRVVCHNIPIRPGRNLAVICESAAVNYRQKKMGYNAAQELYNRVTNNLLKKSK.

Active-site residues include His139 and Lys160. 154–161 (GESGIGKS) is a binding site for ATP. Ser161 contributes to the Mg(2+) binding site. The Proton acceptor; for phosphorylation activity. Proton donor; for dephosphorylation activity role is filled by Asp178. The tract at residues 202–211 (IELRGIGIID) is important for the catalytic mechanism of both phosphorylation and dephosphorylation. Glu203 contributes to the Mg(2+) binding site. Arg244 is a catalytic residue. Residues 265-270 (PIRPGR) are important for the catalytic mechanism of dephosphorylation.

It belongs to the HPrK/P family. As to quaternary structure, homohexamer. The cofactor is Mg(2+).

It carries out the reaction [HPr protein]-L-serine + ATP = [HPr protein]-O-phospho-L-serine + ADP + H(+). The catalysed reaction is [HPr protein]-O-phospho-L-serine + phosphate + H(+) = [HPr protein]-L-serine + diphosphate. In terms of biological role, catalyzes the ATP- as well as the pyrophosphate-dependent phosphorylation of a specific serine residue in HPr, a phosphocarrier protein of the phosphoenolpyruvate-dependent sugar phosphotransferase system (PTS). HprK/P also catalyzes the pyrophosphate-producing, inorganic phosphate-dependent dephosphorylation (phosphorolysis) of seryl-phosphorylated HPr (P-Ser-HPr). The two antagonistic activities of HprK/P are regulated by several intracellular metabolites, which change their concentration in response to the absence or presence of rapidly metabolisable carbon sources (glucose, fructose, etc.) in the growth medium. Therefore, by controlling the phosphorylation state of HPr, HPrK/P is a sensor enzyme that plays a major role in the regulation of carbon metabolism and sugar transport: it mediates carbon catabolite repression (CCR), and regulates PTS-catalyzed carbohydrate uptake and inducer exclusion. The chain is HPr kinase/phosphorylase from Lachnoclostridium phytofermentans (strain ATCC 700394 / DSM 18823 / ISDg) (Clostridium phytofermentans).